Reading from the N-terminus, the 494-residue chain is Bifunctional protein HldE (494 aa).

Positions 1–334 (MPTPILDFDA…RKILPHAYLA (334 aa)) are ribokinase. 209-212 (NRKE) is an ATP binding site. The active site involves Asp279. A cytidylyltransferase region spans residues 362-494 (FTNGCFDILH…LVHRARGGAK (133 aa)).

In the N-terminal section; belongs to the carbohydrate kinase PfkB family. It in the C-terminal section; belongs to the cytidylyltransferase family. Homodimer.

It carries out the reaction D-glycero-beta-D-manno-heptose 7-phosphate + ATP = D-glycero-beta-D-manno-heptose 1,7-bisphosphate + ADP + H(+). The catalysed reaction is D-glycero-beta-D-manno-heptose 1-phosphate + ATP + H(+) = ADP-D-glycero-beta-D-manno-heptose + diphosphate. It participates in nucleotide-sugar biosynthesis; ADP-L-glycero-beta-D-manno-heptose biosynthesis; ADP-L-glycero-beta-D-manno-heptose from D-glycero-beta-D-manno-heptose 7-phosphate: step 1/4. The protein operates within nucleotide-sugar biosynthesis; ADP-L-glycero-beta-D-manno-heptose biosynthesis; ADP-L-glycero-beta-D-manno-heptose from D-glycero-beta-D-manno-heptose 7-phosphate: step 3/4. Functionally, catalyzes the phosphorylation of D-glycero-D-manno-heptose 7-phosphate at the C-1 position to selectively form D-glycero-beta-D-manno-heptose-1,7-bisphosphate. In terms of biological role, catalyzes the ADP transfer from ATP to D-glycero-beta-D-manno-heptose 1-phosphate, yielding ADP-D-glycero-beta-D-manno-heptose. In Bradyrhizobium diazoefficiens (strain JCM 10833 / BCRC 13528 / IAM 13628 / NBRC 14792 / USDA 110), this protein is Bifunctional protein HldE.